Consider the following 1248-residue polypeptide: ATP-dependent helicase/nuclease subunit A (1248 aa).

The region spanning 4–480 (TKWTKEQYAA…ILLFKNFRSR (477 aa)) is the UvrD-like helicase ATP-binding domain. Residue 25–32 (AAAGAGKT) participates in ATP binding. In terms of domain architecture, UvrD-like helicase C-terminal spans 523-820 (ETVVGGAIEL…RLMSIHKSKG (298 aa)).

The protein belongs to the helicase family. AddA subfamily. As to quaternary structure, heterodimer of AddA and AddB/RexB. Mg(2+) serves as cofactor.

It carries out the reaction Couples ATP hydrolysis with the unwinding of duplex DNA by translocating in the 3'-5' direction.. It catalyses the reaction ATP + H2O = ADP + phosphate + H(+). Functionally, the heterodimer acts as both an ATP-dependent DNA helicase and an ATP-dependent, dual-direction single-stranded exonuclease. Recognizes the chi site generating a DNA molecule suitable for the initiation of homologous recombination. The AddA nuclease domain is required for chi fragment generation; this subunit has the helicase and 3' -&gt; 5' nuclease activities. This is ATP-dependent helicase/nuclease subunit A from Ruminiclostridium cellulolyticum (strain ATCC 35319 / DSM 5812 / JCM 6584 / H10) (Clostridium cellulolyticum).